Reading from the N-terminus, the 441-residue chain is Chitinase-like protein Idgf3 (441 aa).

The signal sequence occupies residues Met-1–Ala-23. The GH18 domain occupies Pro-25–Leu-441. Cysteines 29 and 56 form a disulfide. A glycan (N-linked (GlcNAc...) asparagine) is linked at Asn-221. The interval Gly-310–Lys-331 is disordered. A disulfide bridge connects residues Cys-342 and Cys-425.

It belongs to the glycosyl hydrolase 18 family. IDGF subfamily. In terms of processing, glycosylated.

It localises to the secreted. In terms of biological role, cooperates with insulin-like peptides to stimulate the proliferation, polarization and motility of imaginal disk cells. May act by stabilizing the binding of insulin-like peptides to its receptor through a simultaneous interaction with both molecules to form a multiprotein signaling complex. This Drosophila simulans (Fruit fly) protein is Chitinase-like protein Idgf3 (Idgf3).